Consider the following 276-residue polypeptide: Tryptophan synthase alpha chain (276 aa).

Catalysis depends on proton acceptor residues Glu-49 and Asp-60.

The protein belongs to the TrpA family. Tetramer of two alpha and two beta chains.

It catalyses the reaction (1S,2R)-1-C-(indol-3-yl)glycerol 3-phosphate + L-serine = D-glyceraldehyde 3-phosphate + L-tryptophan + H2O. It participates in amino-acid biosynthesis; L-tryptophan biosynthesis; L-tryptophan from chorismate: step 5/5. In terms of biological role, the alpha subunit is responsible for the aldol cleavage of indoleglycerol phosphate to indole and glyceraldehyde 3-phosphate. The protein is Tryptophan synthase alpha chain of Corynebacterium aurimucosum (strain ATCC 700975 / DSM 44827 / CIP 107346 / CN-1) (Corynebacterium nigricans).